The sequence spans 216 residues: Probable nicotinate-nucleotide adenylyltransferase (216 aa).

Belongs to the NadD family.

It carries out the reaction nicotinate beta-D-ribonucleotide + ATP + H(+) = deamido-NAD(+) + diphosphate. The protein operates within cofactor biosynthesis; NAD(+) biosynthesis; deamido-NAD(+) from nicotinate D-ribonucleotide: step 1/1. In terms of biological role, catalyzes the reversible adenylation of nicotinate mononucleotide (NaMN) to nicotinic acid adenine dinucleotide (NaAD). The chain is Probable nicotinate-nucleotide adenylyltransferase from Citrifermentans bemidjiense (strain ATCC BAA-1014 / DSM 16622 / JCM 12645 / Bem) (Geobacter bemidjiensis).